We begin with the raw amino-acid sequence, 340 residues long: Hydroxyurea phosphotransferase (340 aa).

Catalysis depends on Asp-240, which acts as the Proton acceptor.

The protein belongs to the aminoglycoside phosphotransferase family.

Functionally, potential phosphotransferase that inactivates hydroxyurea by phosphorylation of the hydroxy group in the hydroxylamine moiety. This chain is Hydroxyurea phosphotransferase (hur), found in Kitasatospora aureofaciens (Streptomyces aureofaciens).